The sequence spans 186 residues: Ribosome-recycling factor (186 aa).

This sequence belongs to the RRF family.

Its subcellular location is the cytoplasm. Functionally, responsible for the release of ribosomes from messenger RNA at the termination of protein biosynthesis. May increase the efficiency of translation by recycling ribosomes from one round of translation to another. This Nitratiruptor sp. (strain SB155-2) protein is Ribosome-recycling factor.